Here is an 877-residue protein sequence, read N- to C-terminus: MTSAEIRQQFLDFFASKGHQIVPSAPIVNKNDPTLMFTNAGMNQFKDYFLGNETPKYRRIADTQKCLRVSGKHNDLEEVGIDTYHHTMFEMLGNWSFGDYFKEEAIAWSWELLTSVYKLPKDRLYVTIFEGDDKEKLARDTEAYNFWKKWIAEDRILLGNKKDNFWEMGEQGPCGPCSEIHVDLRTDEEVKAVDGKTLVNNDHPQVVEIWNNVFIQFNRKADGSLEELPDKHVDTGMGFERLCMAIQKKKSNYDTDVFTPMIDFVAKAAGIKYGADEKTDIAMRVMADHIRAISFVIADGQLPSNNKAGYVIRRILRRAVRYAYTFLNLKEPFLYKLVAVLADQLAHVFPELKSQQDFVAKVVQEEEISFLRTLDIGLSKLEQIREELKAKKATTIDGKTAFELYDTFGFPLDLIQLIARENGLTVDEAGFDTEMAAQKQRSKKAASVETSDWTIVTEDDEVEFVGYDHLISTSRIIKYRQVKTKGKDQYQLVLDTTPFYAESGGQAGDTGTLVQGDKKIKVLNTVKENNLIIHITEQLPADLKAPVDCKVNVLQRSLTENNHSATHLLHAALKQVLGSHVNQKGSLVNESVLRFDFSHFSKVTEEELKKVELIVNEKIRENISLNERRNVPIEEAKKLGAMALFGEKYGEYVRMITFDDSFSRELCGGTHVSSTGKIGFFKITSESSVAAGVRRIEALTATAAEVFVDEQQTTLAKITELMKNPKDLVKSLEDLLEERIVLQKQLDEYQAEKSKAIAKSLKDTVEKVGDINVIRAKLVLPSVDAMRQVAYDLKQTVDNLLLVLAVNVDGKPNIAVMISDNLVADKGLNASQMIRELSKEIQGGGGGQPFYATAGGKELNGLDKVIAKSKDLIQVHA.

Zn(2+)-binding residues include histidine 563, histidine 567, cysteine 667, and histidine 671.

It belongs to the class-II aminoacyl-tRNA synthetase family. Requires Zn(2+) as cofactor.

The protein localises to the cytoplasm. It carries out the reaction tRNA(Ala) + L-alanine + ATP = L-alanyl-tRNA(Ala) + AMP + diphosphate. In terms of biological role, catalyzes the attachment of alanine to tRNA(Ala) in a two-step reaction: alanine is first activated by ATP to form Ala-AMP and then transferred to the acceptor end of tRNA(Ala). Also edits incorrectly charged Ser-tRNA(Ala) and Gly-tRNA(Ala) via its editing domain. This chain is Alanine--tRNA ligase, found in Cytophaga hutchinsonii (strain ATCC 33406 / DSM 1761 / CIP 103989 / NBRC 15051 / NCIMB 9469 / D465).